Reading from the N-terminus, the 147-residue chain is Ribonuclease 4 (147 aa).

The N-terminal stretch at 1–28 (MALQRTQAFLLLLLLTLLGLGLVQPSYG) is a signal peptide. Gln29 is subject to Pyrrolidone carboxylic acid. Positions 35, 40, 68, 71, and 72 each coordinate dUMP. His40 acts as the Proton acceptor in catalysis. 4 disulfides stabilise this stretch: Cys53-Cys109, Cys67-Cys120, Cys85-Cys135, and Cys92-Cys99. His144 acts as the Proton donor in catalysis. Phe145 contacts dUMP.

Belongs to the pancreatic ribonuclease family.

Its subcellular location is the secreted. Cleaves preferentially after uridine bases. Has antimicrobial activity against uropathogenic E.coli (UPEC). Probably contributes to urinary tract sterility. This Bos taurus (Bovine) protein is Ribonuclease 4 (RNASE4).